We begin with the raw amino-acid sequence, 119 residues long: Small ribosomal subunit protein uS13m (119 aa).

It belongs to the universal ribosomal protein uS13 family. Part of the small ribosomal subunit.

It localises to the mitochondrion. In terms of biological role, located at the top of the head of the small subunit, it contacts several helices of the small subunit rRNA. The protein is Small ribosomal subunit protein uS13m (RPS13) of Prototheca wickerhamii.